We begin with the raw amino-acid sequence, 481 residues long: MSYELVVGLEVHCQLNTNSKAFCGCSTEFGKPANTNVCPVCLALPGALPVLNQRVVDDAIKLGMSTGCSIAPHSVLARKNYFYPDLPKGYQISQFEEPICLEGCLSIDAGEGQRDIRLIRIHIEEDAGKSIHDIGDDTFIDANRSGVPLLEIVSYPDIRSSKEASAYLQKLRQIVKYLGISDGNMEEGSLRCDANVSMRPRGESEYGTRTEIKNMNSFKSVEKAIEYEAQRHIDVLEAGGTIVQETRLWDADKLETRSMRGKEFSHDYRYFPDPDLVPIAVDDAMLDRLRKELPEFPEARAARFVEEYDIPPYDAGVLTAEREIADYFEETVRVSGDGKAASNWVMGEVLRTLKEKYIPIASFTISPERLGELIGLIAKGTISNTIAKQVFEKMQELDEGPQEIVRKEGLAQVSDTGAIEGVVQEIIDANPAQVEQYRSGKTRIFGFFVGQCMKEMKGKANPAVVNDILKQKLDEGMTGDA.

The protein belongs to the GatB/GatE family. GatB subfamily. In terms of assembly, heterotrimer of A, B and C subunits.

It catalyses the reaction L-glutamyl-tRNA(Gln) + L-glutamine + ATP + H2O = L-glutaminyl-tRNA(Gln) + L-glutamate + ADP + phosphate + H(+). The catalysed reaction is L-aspartyl-tRNA(Asn) + L-glutamine + ATP + H2O = L-asparaginyl-tRNA(Asn) + L-glutamate + ADP + phosphate + 2 H(+). Its function is as follows. Allows the formation of correctly charged Asn-tRNA(Asn) or Gln-tRNA(Gln) through the transamidation of misacylated Asp-tRNA(Asn) or Glu-tRNA(Gln) in organisms which lack either or both of asparaginyl-tRNA or glutaminyl-tRNA synthetases. The reaction takes place in the presence of glutamine and ATP through an activated phospho-Asp-tRNA(Asn) or phospho-Glu-tRNA(Gln). This chain is Aspartyl/glutamyl-tRNA(Asn/Gln) amidotransferase subunit B, found in Prosthecochloris aestuarii (strain DSM 271 / SK 413).